A 356-amino-acid chain; its full sequence is MTGKKSSREKRRKRSGQEAAASLAAPDLVPVLSGSAGGCGSGGCCGVAGGGTSVAGGAERSERRKRRSTDSSSSVSGSLQQETKYLLPSLEKELFLAEHSDLEEGGLDLNVSLKPVSFYISDKKEMLQQCFCIIGEKKLQKMLPDVLKNCSVEEIKKLCQEQLELLSEKQILKILEGDNGLDSDMEEEADDGCKVAPDLISQQDTCVDSTSSLRENKQPEVLESKQGKGEDSDVLSINADAYDSDIEGPSIDEAAAAATATPAATAVATAASEVPENTVQSEAGQIDDLERDIEKSVNEILGLAESSPKEPKVATLTVPPAEDVQPSAQQLELLELEMRARAIKALMKAGDIKKPV.

Over residues 1 to 14 (MTGKKSSREKRRKR) the composition is skewed to basic residues. 2 disordered regions span residues 1–24 (MTGK…ASLA) and 54–80 (VAGG…GSLQ). The residue at position 68 (Ser-68) is a Phosphoserine. At Thr-69 the chain carries Phosphothreonine. Residue Lys-84 forms a Glycyl lysine isopeptide (Lys-Gly) (interchain with G-Cter in SUMO2) linkage. A phosphoserine mark is found at Ser-100 and Ser-183. The interval 208-234 (DSTSSLRENKQPEVLESKQGKGEDSDV) is disordered. Positions 214–231 (RENKQPEVLESKQGKGED) are enriched in basic and acidic residues. A coiled-coil region spans residues 276–306 (ENTVQSEAGQIDDLERDIEKSVNEILGLAES). Ser-307 bears the Phosphoserine mark.

Functionally, anti-apoptotic protein that modulates a caspase-10 dependent mitochondrial caspase-3/9 feedback amplification loop. This is Caspase activity and apoptosis inhibitor 1 (Caap1) from Mus musculus (Mouse).